Here is an 84-residue protein sequence, read N- to C-terminus: Sulfur carrier protein TusA (84 aa).

Catalysis depends on cysteine 19, which acts as the Cysteine persulfide intermediate.

Belongs to the sulfur carrier protein TusA family. As to quaternary structure, interacts with IscS.

It is found in the cytoplasm. The protein operates within tRNA modification. Functionally, sulfur carrier protein involved in sulfur trafficking in the cell. Part of a sulfur-relay system required for 2-thiolation during synthesis of 2-thiouridine of the modified wobble base 5-methylaminomethyl-2-thiouridine (mnm(5)s(2)U) in tRNA. Interacts with IscS and stimulates its cysteine desulfurase activity. Accepts an activated sulfur from IscS, which is then transferred to TusD, and thus determines the direction of sulfur flow from IscS to 2-thiouridine formation. Also appears to be involved in sulfur transfer for the biosynthesis of molybdopterin. This chain is Sulfur carrier protein TusA, found in Proteus mirabilis (strain HI4320).